A 343-amino-acid polypeptide reads, in one-letter code: 4-hydroxythreonine-4-phosphate dehydrogenase (343 aa).

Residues histidine 141 and threonine 142 each contribute to the substrate site. A divalent metal cation is bound by residues histidine 175, histidine 220, and histidine 275. Residues lysine 283, asparagine 292, and arginine 301 each contribute to the substrate site.

This sequence belongs to the PdxA family. Homodimer. The cofactor is Zn(2+). It depends on Mg(2+) as a cofactor. Co(2+) is required as a cofactor.

It is found in the cytoplasm. The enzyme catalyses 4-(phosphooxy)-L-threonine + NAD(+) = 3-amino-2-oxopropyl phosphate + CO2 + NADH. It functions in the pathway cofactor biosynthesis; pyridoxine 5'-phosphate biosynthesis; pyridoxine 5'-phosphate from D-erythrose 4-phosphate: step 4/5. Functionally, catalyzes the NAD(P)-dependent oxidation of 4-(phosphooxy)-L-threonine (HTP) into 2-amino-3-oxo-4-(phosphooxy)butyric acid which spontaneously decarboxylates to form 3-amino-2-oxopropyl phosphate (AHAP). The chain is 4-hydroxythreonine-4-phosphate dehydrogenase from Janthinobacterium sp. (strain Marseille) (Minibacterium massiliensis).